The sequence spans 661 residues: Acetyl-coenzyme A synthetase (661 aa).

CoA contacts are provided by residues 197-200 and threonine 320; that span reads RGGK. ATP-binding positions include 396 to 398, 420 to 425, aspartate 511, and arginine 526; these read GEP and DTWWQT. Serine 534 provides a ligand contact to CoA. ATP is bound at residue arginine 537. Valine 548 and valine 553 together coordinate Mg(2+). Position 620 is an N6-acetyllysine (lysine 620).

Belongs to the ATP-dependent AMP-binding enzyme family. Mg(2+) serves as cofactor. Post-translationally, acetylated. Deacetylation by the SIR2-homolog deacetylase activates the enzyme.

It carries out the reaction acetate + ATP + CoA = acetyl-CoA + AMP + diphosphate. In terms of biological role, catalyzes the conversion of acetate into acetyl-CoA (AcCoA), an essential intermediate at the junction of anabolic and catabolic pathways. AcsA undergoes a two-step reaction. In the first half reaction, AcsA combines acetate with ATP to form acetyl-adenylate (AcAMP) intermediate. In the second half reaction, it can then transfer the acetyl group from AcAMP to the sulfhydryl group of CoA, forming the product AcCoA. In Leptospira interrogans serogroup Icterohaemorrhagiae serovar copenhageni (strain Fiocruz L1-130), this protein is Acetyl-coenzyme A synthetase.